The sequence spans 276 residues: Protein-glutamine gamma-glutamyltransferase (276 aa).

This sequence belongs to the bacillus TGase family.

It catalyses the reaction L-glutaminyl-[protein] + L-lysyl-[protein] = [protein]-L-lysyl-N(6)-5-L-glutamyl-[protein] + NH4(+). Functionally, probably plays a role in the assembly of the spore coat proteins by catalyzing epsilon-(gamma-glutamyl)lysine cross-links. This chain is Protein-glutamine gamma-glutamyltransferase, found in Bacillus cereus (strain B4264).